Reading from the N-terminus, the 136-residue chain is Large ribosomal subunit protein uL16 (136 aa).

Belongs to the universal ribosomal protein uL16 family. In terms of assembly, part of the 50S ribosomal subunit.

In terms of biological role, binds 23S rRNA and is also seen to make contacts with the A and possibly P site tRNAs. This Pectobacterium atrosepticum (strain SCRI 1043 / ATCC BAA-672) (Erwinia carotovora subsp. atroseptica) protein is Large ribosomal subunit protein uL16.